Reading from the N-terminus, the 609-residue chain is MTIDNPSAFLKTLPTGSGVYQMQDAQGKVIYVGKARNLQKRVSSYFRRQLDSKTQAMMAQVQSIQTTITRNENEALLLEASFIKQFRPRYNVLLRDDKSYPYLYLATHQKFPRLDFYRGAKKAPGRYFGPYPNAGSVRENLALIQKLFKLRQCSESFFKNRTRPCLQYQIKRCTAPCVGYVNEQEYRRQVEDAILFFEGKNDQVIIKLTERMEVASENLVFEEAAHYRDQIRQLRRLQKQQIITGGKGNIDIIGIAESNGAIGFAILFIRSGRMIGHKPFFPNTPLGTTLQTALVEFIPQYYLSPLRNGDIPERIVTSEPLEDRLWIQRALSSGLNRKLAITDQKRAPYKQWQAMAALNAAQALSQHLAQKNTFALKLEAIQKSLALPNPIARIECFDISHTLGEATVASCVVFGEEGPIKKDYRRFNISGVTPGDDYGALRQALTRRYVRLKEGEGILPDVLLIDGGMGQLRQAAEVLEELQVSGVILTAIAKGPGRKAGLEKLFVWGRREEIHLPADNIAFHLIQQIRDEAHRFAITAHCNRRAKRRVESTLQEIEGIGPKRRQKLLKYFGGLQELQRASIEEIARVPGVSETLAKAIYDDCHQHKG.

The GIY-YIG domain occupies 15 to 92; that stretch reads TGSGVYQMQD…IKQFRPRYNV (78 aa). Positions 202 to 237 constitute a UVR domain; sequence DQVIIKLTERMEVASENLVFEEAAHYRDQIRQLRRL.

The protein belongs to the UvrC family. As to quaternary structure, interacts with UvrB in an incision complex.

It is found in the cytoplasm. The UvrABC repair system catalyzes the recognition and processing of DNA lesions. UvrC both incises the 5' and 3' sides of the lesion. The N-terminal half is responsible for the 3' incision and the C-terminal half is responsible for the 5' incision. The sequence is that of UvrABC system protein C from Coxiella burnetii (strain CbuG_Q212) (Coxiella burnetii (strain Q212)).